The sequence spans 316 residues: MKVLWVALVITLLAGCQAEVEPEPEPEVQLGQEWPGWQDSQPWEQALGRFWDYLRWVQTLSDQVQEELLSTQVIQELTVLMDETMKEVKAYREELEGQLAPIAQETQARVSKELQAAQARLASDMEDVRSRLAQYRSEVQAMMGQTTDELRGRLASHLRKLRKRLLRDAEDLQKRLAVYRAGALEGSERSVSAIRERLGPLVEQGRARAATVGTLASQTLRERAEAWHQKLRGRVEEMGTQARDHLEEMREQLEEVRAKVEEQGSQMRLQAEAFQARLKSWFEPLVEDMQRQWAGLVEKVQLAMATSSTSAPSENH.

A signal peptide spans 1–18; it reads MKVLWVALVITLLAGCQA. 8 repeat units span residues 79 to 100, 101 to 122, 123 to 144, 145 to 166, 167 to 188, 189 to 210, 211 to 232, and 233 to 254. The segment at 79 to 254 is 8 X 22 AA approximate tandem repeats; sequence VLMDETMKEV…HLEEMREQLE (176 aa). Position 142 is a methionine sulfoxide (methionine 142). The LDL and other lipoprotein receptors binding stretch occupies residues 157 to 167; it reads HLRKLRKRLLR. Residue 161-164 participates in heparin binding; sequence LRKR. Positions 209–289 are lipid-binding and lipoprotein association; the sequence is AATVGTLASQ…SWFEPLVEDM (81 aa). Position 228-235 (228-235) interacts with heparin; sequence HQKLRGRV. The homooligomerization stretch occupies residues 265–316; that stretch reads SQMRLQAEAFQARLKSWFEPLVEDMQRQWAGLVEKVQLAMATSSTSAPSENH. A specificity for association with VLDL region spans residues 277–289; sequence RLKSWFEPLVEDM.

The protein belongs to the apolipoprotein A1/A4/E family. Homotetramer. May interact with ABCA1; functionally associated with ABCA1 in the biogenesis of HDLs. May interact with APP/A4 amyloid-beta peptide; the interaction is extremely stable in vitro but its physiological significance is unclear. May interact with MAPT. May interact with MAP2. In the cerebrospinal fluid, interacts with secreted SORL1. Interacts with PMEL; this allows the loading of PMEL luminal fragment on ILVs to induce fibril nucleation. APOE exists as multiple glycosylated and sialylated glycoforms within cells and in plasma. The extent of glycosylation and sialylation are tissue and context specific. Post-translationally, glycated in plasma VLDL. In terms of processing, phosphorylated by FAM20C in the extracellular medium.

Its subcellular location is the secreted. It is found in the extracellular space. It localises to the extracellular matrix. The protein localises to the extracellular vesicle. The protein resides in the endosome. Its subcellular location is the multivesicular body. Functionally, APOE is an apolipoprotein, a protein associating with lipid particles, that mainly functions in lipoprotein-mediated lipid transport between organs via the plasma and interstitial fluids. APOE is a core component of plasma lipoproteins and is involved in their production, conversion and clearance. Apolipoproteins are amphipathic molecules that interact both with lipids of the lipoprotein particle core and the aqueous environment of the plasma. As such, APOE associates with chylomicrons, chylomicron remnants, very low density lipoproteins (VLDL) and intermediate density lipoproteins (IDL) but shows a preferential binding to high-density lipoproteins (HDL). It also binds a wide range of cellular receptors including the LDL receptor/LDLR and the very low-density lipoprotein receptor/VLDLR that mediate the cellular uptake of the APOE-containing lipoprotein particles. Finally, APOE also has a heparin-binding activity and binds heparan-sulfate proteoglycans on the surface of cells, a property that supports the capture and the receptor-mediated uptake of APOE-containing lipoproteins by cells. The chain is Apolipoprotein E (APOE) from Lipotes vexillifer (Yangtze river dolphin).